The primary structure comprises 197 residues: Small ribosomal subunit protein eS1 (197 aa).

It belongs to the eukaryotic ribosomal protein eS1 family.

The polypeptide is Small ribosomal subunit protein eS1 (Sulfolobus acidocaldarius (strain ATCC 33909 / DSM 639 / JCM 8929 / NBRC 15157 / NCIMB 11770)).